The primary structure comprises 256 residues: Major prion protein (256 aa).

The signal sequence occupies residues methionine 1–cysteine 24. The tract at residues lysine 25–alanine 233 is interaction with GRB2, ERI3 and SYN1. A disordered region spans residues proline 28–threonine 110. A run of 5 repeats spans residues proline 54–glutamine 62, proline 63–glutamine 70, proline 71–glutamine 78, proline 79–glutamine 86, and proline 87–glutamine 95. A 5 X 8 AA tandem repeats of P-H-G-G-G-W-G-Q region spans residues proline 54–glutamine 95. Gly residues predominate over residues glutamine 55 to glycine 97. Cu(2+) contacts are provided by histidine 64, glycine 65, glycine 66, histidine 72, glycine 73, glycine 74, histidine 80, glycine 81, glycine 82, histidine 88, glycine 90, and glycine 91. A disulfide bridge connects residues cysteine 182 and cysteine 217. N-linked (GlcNAc...) asparagine glycosylation is found at asparagine 184 and asparagine 200. A lipid anchor (GPI-anchor amidated alanine) is attached at alanine 233. A propeptide spans serine 234 to glycine 256 (removed in mature form).

Belongs to the prion family. In terms of assembly, monomer and homodimer. Has a tendency to aggregate into amyloid fibrils containing a cross-beta spine, formed by a steric zipper of superposed beta-strands. Soluble oligomers may represent an intermediate stage on the path to fibril formation. Copper binding may promote oligomerization. Interacts with GRB2, APP, ERI3/PRNPIP and SYN1. Mislocalized cytosolically exposed PrP interacts with MGRN1; this interaction alters MGRN1 subcellular location and causes lysosomal enlargement. Interacts with KIAA1191.

The protein resides in the cell membrane. It localises to the golgi apparatus. Its primary physiological function is unclear. Has cytoprotective activity against internal or environmental stresses. May play a role in neuronal development and synaptic plasticity. May be required for neuronal myelin sheath maintenance. May play a role in iron uptake and iron homeostasis. Soluble oligomers are toxic to cultured neuroblastoma cells and induce apoptosis (in vitro). Association with GPC1 (via its heparan sulfate chains) targets PRNP to lipid rafts. Also provides Cu(2+) or Zn(2+) for the ascorbate-mediated GPC1 deaminase degradation of its heparan sulfate side chains. In Capra hircus (Goat), this protein is Major prion protein (PRNP).